The chain runs to 233 residues: Aspartate/glutamate leucyltransferase (233 aa).

This sequence belongs to the R-transferase family. Bpt subfamily.

The protein localises to the cytoplasm. It catalyses the reaction N-terminal L-glutamyl-[protein] + L-leucyl-tRNA(Leu) = N-terminal L-leucyl-L-glutamyl-[protein] + tRNA(Leu) + H(+). The catalysed reaction is N-terminal L-aspartyl-[protein] + L-leucyl-tRNA(Leu) = N-terminal L-leucyl-L-aspartyl-[protein] + tRNA(Leu) + H(+). Functionally, functions in the N-end rule pathway of protein degradation where it conjugates Leu from its aminoacyl-tRNA to the N-termini of proteins containing an N-terminal aspartate or glutamate. In Vibrio cholerae serotype O1 (strain ATCC 39541 / Classical Ogawa 395 / O395), this protein is Aspartate/glutamate leucyltransferase.